A 500-amino-acid chain; its full sequence is Transcription factor-like 5 protein (500 aa).

Pro residues-rich tracts occupy residues 1 to 12 (MSGPGPREPPPE) and 196 to 210 (AEPPPAPRGPEPPEP). Disordered stretches follow at residues 1 to 34 (MSGPGPREPPPEAGAAGGEAAVEGAGGGDAALGE) and 191 to 211 (FNSIPAEPPPAPRGPEPPEPG). Positions 347 to 356 (MRQLDTNVER) are R3 epitope (recognized by Chagas's antibodies). Residues 365–410 (VGEGATATQGAWQSSESSQANLGEQAQSGPQGGRSQRRERHNRMER) form a disordered region. Over residues 370–393 (TATQGAWQSSESSQANLGEQAQSG) the composition is skewed to polar residues. The bHLH domain occupies 400–450 (QRRERHNRMERDRRRRIRICCDELNLLVPFCNAETDKATTLQWTTAFLKYI). Positions 481–500 (SLVTCPAQGSLQSSPSMEIK) are R1 epitope (recognized by Chagas's antibodies).

In terms of assembly, efficient DNA binding requires dimerization with another bHLH protein. Isoform 3 is testis specific. Isoform 2 is pancreas specific.

The protein resides in the nucleus. Functionally, putative transcription factor. Isoform 3 may play a role in early spermatogenesis. This is Transcription factor-like 5 protein (TCFL5) from Homo sapiens (Human).